A 297-amino-acid polypeptide reads, in one-letter code: Phosphatidylglycerol--prolipoprotein diacylglyceryl transferase (297 aa).

The next 4 helical transmembrane spans lie at Phe20–Ile40, Glu57–Phe77, Trp107–Phe127, and Ile133–Gly153. Residue Arg154 participates in a 1,2-diacyl-sn-glycero-3-phospho-(1'-sn-glycerol) binding. A run of 3 helical transmembrane segments spans residues Pro193–Phe213, Gly225–Leu245, and Ala266–Leu286.

Belongs to the Lgt family.

The protein localises to the cell inner membrane. It catalyses the reaction L-cysteinyl-[prolipoprotein] + a 1,2-diacyl-sn-glycero-3-phospho-(1'-sn-glycerol) = an S-1,2-diacyl-sn-glyceryl-L-cysteinyl-[prolipoprotein] + sn-glycerol 1-phosphate + H(+). It functions in the pathway protein modification; lipoprotein biosynthesis (diacylglyceryl transfer). Catalyzes the transfer of the diacylglyceryl group from phosphatidylglycerol to the sulfhydryl group of the N-terminal cysteine of a prolipoprotein, the first step in the formation of mature lipoproteins. The protein is Phosphatidylglycerol--prolipoprotein diacylglyceryl transferase of Prochlorococcus marinus (strain MIT 9301).